The sequence spans 172 residues: Envelope protein UL45 (172 aa).

Residues 1 to 27 (MAFRASGPAYQPLAPAASPARARVPAV) lie on the Intravirion side of the membrane. A helical; Signal-anchor for type II membrane protein transmembrane segment spans residues 28 to 48 (AWIGVGAIVGAFALVAALVLV). Over 49 to 172 (PPRSSWGLSP…TSIRNALGLP (124 aa)) the chain is Virion surface.

This sequence belongs to the herpesviridae HHV-1 UL45 family.

It is found in the virion membrane. Functionally, important virulence factor of HSV neurotropism. Seems to be required for glycoprotein B-induced fusion. Dispensable for growth in vitro. This is Envelope protein UL45 from Homo sapiens (Human).